A 760-amino-acid polypeptide reads, in one-letter code: Serine/threonine-protein kinase PknG (760 aa).

A disordered region spans residues 1 to 31 (MTSPENPDLPDADDAYVDSGPGTQPASLEDL). Positions 161–403 (YEIKGCIAHG…SAEEMSSQLL (243 aa)) constitute a Protein kinase domain. Residues 167-175 (IAHGGLGWV) and Lys191 each bind ATP. Asp286 serves as the catalytic Proton acceptor.

This sequence belongs to the protein kinase superfamily. Ser/Thr protein kinase family. In terms of assembly, interacts with GarA in vitro.

It carries out the reaction L-seryl-[protein] + ATP = O-phospho-L-seryl-[protein] + ADP + H(+). It catalyses the reaction L-threonyl-[protein] + ATP = O-phospho-L-threonyl-[protein] + ADP + H(+). This chain is Serine/threonine-protein kinase PknG (pknG), found in Mycolicibacterium smegmatis (strain ATCC 700084 / mc(2)155) (Mycobacterium smegmatis).